The chain runs to 190 residues: MREITRTTKETNIKASLELYGSGVAKIETGIGFFDHMLESLAKHALWDLEISCEGDLQVDAHHSVEDCGIVLGLLLRESLYPAQGIERFGNASVVMDESCVECDLDVSNRPFLVFDMTIEGAVGEFDAELAEEFFRALAFNAGLSLHIVQKRGKNRHHLIEAAFKALAVAMRRACTQNPRIGTPSTKGLL.

This sequence belongs to the imidazoleglycerol-phosphate dehydratase family.

The protein localises to the cytoplasm. The enzyme catalyses D-erythro-1-(imidazol-4-yl)glycerol 3-phosphate = 3-(imidazol-4-yl)-2-oxopropyl phosphate + H2O. It participates in amino-acid biosynthesis; L-histidine biosynthesis; L-histidine from 5-phospho-alpha-D-ribose 1-diphosphate: step 6/9. This is Imidazoleglycerol-phosphate dehydratase from Wolinella succinogenes (strain ATCC 29543 / DSM 1740 / CCUG 13145 / JCM 31913 / LMG 7466 / NCTC 11488 / FDC 602W) (Vibrio succinogenes).